Reading from the N-terminus, the 146-residue chain is Angiogenin (146 aa).

Positions 1-24 (MVMGLGLFLLVFMLGLGLTSPTLA) are cleaved as a signal peptide. Q25 carries the post-translational modification Pyrrolidone carboxylic acid. The Proton acceptor role is filled by H37. R45 is a tRNA binding site. Intrachain disulfides connect C50–C105, C63–C116, and C81–C131. The Nucleolar localization signal motif lies at 55–59 (RRQGM). Positions 105 and 127 each coordinate tRNA. H138 serves as the catalytic Proton donor.

It belongs to the pancreatic ribonuclease family. In terms of assembly, homodimer. Interacts with RNH1; inhibiting ANG ribonuclease activity. Interacts with PCNA.

Its subcellular location is the secreted. It localises to the nucleus. It is found in the nucleolus. The protein resides in the cytoplasm. The protein localises to the stress granule. With respect to regulation, has weak tRNA ribonuclease activity by itself due to partial autoinhibition by its C-terminus, which folds into a short alpha-helix that partially occludes the substrate-binding site. In absence of stress, the ribonuclease activity is inhibited by RNH1 in the cytoplasm. In response to stress, dissociates from RNH1 in the cytoplasm and associates with cytoplasmic ribosomes with vacant A-sites: ribosomes directly activate the tRNA ribonuclease activity of ANG by refolding the C-terminal alpha-helix. In response to stress, the angiogenic activity of ANG is inhibited by RNH1 in the nucleus. Secreted ribonuclease that can either promote or restrict cell proliferation of target cells, depending on the context. Endocytosed in target cells via its receptor PLXNB2 and translocates to the cytoplasm or nucleus. Under stress conditions, localizes to the cytoplasm and promotes the assembly of stress granules (SGs): specifically cleaves a subset of tRNAs within anticodon loops to produce tRNA-derived stress-induced fragments (tiRNAs), resulting in translation repression and inhibition of cell proliferation. tiRNas also prevent formation of apoptosome, thereby promoting cell survival. Preferentially cleaves RNAs between a pyrimidine and an adenosine residue, suggesting that it cleaves the anticodon loop of tRNA(Ala) (32-UUAGCAU-38) after positions 33 and 36. Cleaves a subset of tRNAs, including tRNA(Ala), tRNA(Glu), tRNA(Gly), tRNA(Lys), tRNA(Val), tRNA(His), tRNA(Asp) and tRNA(Sec). Under growth conditions and in differentiated cells, translocates to the nucleus and stimulates ribosomal RNA (rRNA) transcription, including that containing the initiation site sequences of 45S rRNA, thereby promoting cell growth and proliferation. Angiogenin induces vascularization of normal and malignant tissues via its ability to promote rRNA transcription. Involved in hematopoietic stem and progenitor cell (HSPC) growth and survival by promoting rRNA transcription in growth conditions and inhibiting translation in response to stress, respectively. Mediates the crosstalk between myeloid and intestinal epithelial cells to protect the intestinal epithelial barrier integrity: secreted by myeloid cells and promotes intestinal epithelial cells proliferation and survival. Also mediates osteoclast-endothelial cell crosstalk in growing bone: produced by osteoclasts and protects the neighboring vascular cells against senescence by promoting rRNA transcription. This Miopithecus talapoin (Angolan talapoin) protein is Angiogenin (ANG).